Here is a 525-residue protein sequence, read N- to C-terminus: Eukaryotic translation initiation factor 3 subunit L (525 aa).

Over residues 1–19 (MYTQADEYDGGDAGYEDDY) the composition is skewed to acidic residues. The disordered stretch occupies residues 1–21 (MYTQADEYDGGDAGYEDDYSG). Residues 296–502 (DAIRCFSSVL…IHIADTKVDR (207 aa)) enclose the PCI domain.

The protein belongs to the eIF-3 subunit L family. Component of the eukaryotic translation initiation factor 3 (eIF-3) complex.

The protein localises to the cytoplasm. Component of the eukaryotic translation initiation factor 3 (eIF-3) complex, which is involved in protein synthesis of a specialized repertoire of mRNAs and, together with other initiation factors, stimulates binding of mRNA and methionyl-tRNAi to the 40S ribosome. The eIF-3 complex specifically targets and initiates translation of a subset of mRNAs involved in cell proliferation. The sequence is that of Eukaryotic translation initiation factor 3 subunit L from Nematostella vectensis (Starlet sea anemone).